We begin with the raw amino-acid sequence, 108 residues long: Large ribosomal subunit protein uL22 (108 aa).

It belongs to the universal ribosomal protein uL22 family. As to quaternary structure, part of the 50S ribosomal subunit.

In terms of biological role, this protein binds specifically to 23S rRNA; its binding is stimulated by other ribosomal proteins, e.g. L4, L17, and L20. It is important during the early stages of 50S assembly. It makes multiple contacts with different domains of the 23S rRNA in the assembled 50S subunit and ribosome. Its function is as follows. The globular domain of the protein is located near the polypeptide exit tunnel on the outside of the subunit, while an extended beta-hairpin is found that lines the wall of the exit tunnel in the center of the 70S ribosome. The sequence is that of Large ribosomal subunit protein uL22 from Nitratiruptor sp. (strain SB155-2).